A 222-amino-acid polypeptide reads, in one-letter code: Small ribosomal subunit protein uS3 (222 aa).

Residues 38–106 form the KH type-2 domain; sequence IRKFISEKLA…NVHINIVEIK (69 aa).

This sequence belongs to the universal ribosomal protein uS3 family. In terms of assembly, part of the 30S ribosomal subunit. Forms a tight complex with proteins S10 and S14.

Its function is as follows. Binds the lower part of the 30S subunit head. Binds mRNA in the 70S ribosome, positioning it for translation. The sequence is that of Small ribosomal subunit protein uS3 from Lactobacillus gasseri (strain ATCC 33323 / DSM 20243 / BCRC 14619 / CIP 102991 / JCM 1131 / KCTC 3163 / NCIMB 11718 / NCTC 13722 / AM63).